The primary structure comprises 238 residues: Orotidine 5'-phosphate decarboxylase (238 aa).

Residues Asp13, Lys35, 62 to 71 (DLKFHDIPNT), Thr121, Arg182, Gln191, Gly211, and Arg212 each bind substrate. Lys64 serves as the catalytic Proton donor.

Belongs to the OMP decarboxylase family. Type 1 subfamily. As to quaternary structure, homodimer.

It carries out the reaction orotidine 5'-phosphate + H(+) = UMP + CO2. It participates in pyrimidine metabolism; UMP biosynthesis via de novo pathway; UMP from orotate: step 2/2. In terms of biological role, catalyzes the decarboxylation of orotidine 5'-monophosphate (OMP) to uridine 5'-monophosphate (UMP). The chain is Orotidine 5'-phosphate decarboxylase from Saccharophagus degradans (strain 2-40 / ATCC 43961 / DSM 17024).